A 436-amino-acid chain; its full sequence is GTPase Der (436 aa).

2 consecutive EngA-type G domains span residues 4 to 167 (PTVA…PVEE) and 175 to 351 (IRFS…ESQN). GTP contacts are provided by residues 10–17 (GRPNVGKS), 57–61 (DTGGI), 119–122 (NKVD), 181–188 (GRPNVGKS), 229–233 (DTAGM), and 294–297 (NKWD). Positions 352 to 436 (KRIPSAVLND…PINLIARKRK (85 aa)) constitute a KH-like domain.

The protein belongs to the TRAFAC class TrmE-Era-EngA-EngB-Septin-like GTPase superfamily. EngA (Der) GTPase family. In terms of assembly, associates with the 50S ribosomal subunit.

GTPase that plays an essential role in the late steps of ribosome biogenesis. The chain is GTPase Der from Streptococcus agalactiae serotype Ia (strain ATCC 27591 / A909 / CDC SS700).